A 288-amino-acid polypeptide reads, in one-letter code: Glandicoline B O-methyltransferase roqN (288 aa).

S-adenosyl-L-methionine is bound by residues T57, D82, and 109 to 110 (DA).

Belongs to the class I-like SAM-binding methyltransferase superfamily.

The catalysed reaction is glandicoline B + S-adenosyl-L-methionine = meleagrin + S-adenosyl-L-homocysteine + H(+). It functions in the pathway alkaloid biosynthesis. Glandicoline B O-methyltransferase; part of the gene cluster that mediates the biosynthesis of the mycotoxin meleagrin. The first stage is catalyzed by the dipeptide synthase roqA which condenses histidine and tryptophan to produce histidyltryptophanyldiketopiperazine (HTD). HTD is then converted to roquefortine C through two possible pathways. In the first pathway, prenyltransferase roqD transforms HTD to the intermediate roquefortine D, which is in turn converted to roquefortine C by the cytochrome P450 monooxygenase roqR. In the second pathway, HTD is first converted to the intermediate dehydrohistidyltryptophanyldi-ketopiperazine (DHTD) by roqR which is then prenylated by roqD to form roquefortine C. Roquefortine C can be further transformed to meleagrin via three more reactions including oxydation to glandicolin A by roqM, which is further reduced to glandicoline B by roqO. Finally, glandicoline B is converted to meleagrin by the glandicoline B O-methyltransferase roqN. More studies identified further branching and additional metabolites produced by the roquefortine/meleagrin cluster, including roquefortine F, roquefortine L, roquefortine M, roquefortine N and neoxaline. This Penicillium rubens (strain ATCC 28089 / DSM 1075 / NRRL 1951 / Wisconsin 54-1255) (Penicillium chrysogenum) protein is Glandicoline B O-methyltransferase roqN.